The sequence spans 517 residues: Nucleoside transporter FUN26 (517 aa).

Residues 1-63 (MSTSADTDTI…EREQSVSTEP (63 aa)) form a disordered region. The segment covering 25-44 (THSEEISRSGEEHESENNEH) has biased composition (basic and acidic residues). 2 positions are modified to phosphoserine: Ser45 and Ser58. The next 11 membrane-spanning stretches (helical) occupy residues 76-96 (LSYITFFAIGIGLLWPWNCIL), 116-136 (IFTSSMMSFSTISSMLFNIYL), 151-171 (LVWEIIVFTVMCFFTILHFLL), 174-194 (WFNFMFIMMLVVISSMGTAMT), 214-234 (MVGQAVAGVLPSLVLFALAFI), 243-263 (GGILLYFFTTTLVVTICVVMF), 344-364 (LVLSIFTTFVVTLVFPVFASA), 367-387 (VTGLPLSNAQYIPLIFTLWNL), 411-431 (TFIYSLLRVAAIPLFLMFTAI), 446-466 (IVDLCYMLLQFLFGVTNGHVI), and 492-512 (IFVSTGLALGSIISYVFVFII).

It belongs to the SLC29A/ENT transporter (TC 2.A.57) family.

It localises to the membrane. Has broad nucleoside selectivity (uridine, adenosine and cytidine) and most likely functions to transport nucleosides across intracellular membranes. The protein is Nucleoside transporter FUN26 (FUN26) of Saccharomyces cerevisiae (strain ATCC 204508 / S288c) (Baker's yeast).